A 576-amino-acid polypeptide reads, in one-letter code: MAGKPPVLGLAFPARLRGGVLWKAIRAEAAGHVEREWFGSGPHRLKIALPRPEGLSARPHDPRPVDPAHGQKILSGALTLDGGALRLGVDGDPFDTASPSRRFAVSLHRFDWLPDLVAVGPDGARRALRLIDDWRRVFGKWNAFSWGPECLERRVHHLACAAKTLAAEASDAEVADLVFDLARQGRHLLEITRAPERTLERAVAAGLAGCVLAGKPGEPLIDAALKALVPQLDAMVLGDGGHATRSPEAGVELLFDLLTLDDALGQRGRPSPEALSRAIDRLSSATRFFILGDGHLAAFHGGETVGPARIAAALAHDDAGPRSLNAAPHSGYHKMIGGSIEVIADCGPPPVGPLSVNACAQPAAFEIVCAKDRLITSCGWSPEAAGAHAFRLSDAASTVSVADGSAGRPLSGFRAKALGPWLVDGAAKVEAKRHDDVGGVWLDIVHDGWRHLGLTHARRLFLDAVQDELRGEDSLSPLALDPKAAEGPRRYLPFAVRFHLHPDARASIARDGKSVLIRGPSNIGWWLRNDAVDVEIAPSAHFDHGLARKAGQIVLKSQVRPEVGAKIRWKLTKAEG.

In terms of assembly, interacts with FtsZ filaments.

It localises to the cytoplasm. Its subcellular location is the cell inner membrane. In terms of biological role, membrane anchor for FtsZ. Binds and recruits FtsZ polymers to membranes early in the cell cycle. May also improve the efficiency of cytokinesis through the regulation of cell wall hydrolysis. This is FtsZ-localized protein C from Caulobacter vibrioides (strain NA1000 / CB15N) (Caulobacter crescentus).